The primary structure comprises 635 residues: Interferon-induced GTP-binding protein Mx1 (635 aa).

Residues 31-309 (DLALPAIAVI…LVHHIELSLP (279 aa)) enclose the Dynamin-type G domain. Residues 41-48 (GDQSSGKS) are G1 motif. Residue 41 to 48 (GDQSSGKS) coordinates GTP. The segment at 66-68 (VTR) is G2 motif. Residues 147-150 (DLPG) form a G3 motif region. GTP-binding positions include 147 to 151 (DLPGI) and 216 to 219 (TKPD). The tract at residues 216–219 (TKPD) is G4 motif. A G5 motif region spans residues 248–251 (RCRG). The 87-residue stretch at 549 to 635 (LEELMRHLKS…MEARNYLVKF (87 aa)) folds into the GED domain.

It belongs to the TRAFAC class dynamin-like GTPase superfamily. Dynamin/Fzo/YdjA family.

It is found in the cytoplasm. In Ictalurus punctatus (Channel catfish), this protein is Interferon-induced GTP-binding protein Mx1 (mx1).